The chain runs to 226 residues: Ribonuclease 3 (226 aa).

In terms of domain architecture, RNase III spans 6–128; it reads MKKLQKFIGY…IIASIFLDSN (123 aa). Glu-41 contacts Mg(2+). Asp-45 is a catalytic residue. Residues Asn-114 and Glu-117 each coordinate Mg(2+). Glu-117 is an active-site residue. Residues 155–225 enclose the DRBM domain; sequence DPKTRLQEYL…AQNALIRLEV (71 aa).

It belongs to the ribonuclease III family. Homodimer. Mg(2+) serves as cofactor.

It is found in the cytoplasm. The catalysed reaction is Endonucleolytic cleavage to 5'-phosphomonoester.. Its function is as follows. Digests double-stranded RNA. Involved in the processing of primary rRNA transcript to yield the immediate precursors to the large and small rRNAs (23S and 16S). Processes some mRNAs, and tRNAs when they are encoded in the rRNA operon. Processes pre-crRNA and tracrRNA of type II CRISPR loci if present in the organism. This chain is Ribonuclease 3, found in Buchnera aphidicola subsp. Cinara cedri (strain Cc).